The following is a 1030-amino-acid chain: ATPase MORC2A (1030 aa).

Alanine 2 carries the post-translational modification N-acetylalanine. ATP is bound by residues asparagine 39, 87–89 (SAK), and 99–105 (QYGNGLK). Residue asparagine 39 coordinates Mg(2+). Residues 285-362 (KTRAEQEVKK…KDAKQRALKE (78 aa)) are a coiled coil. Lysine 427 serves as a coordination point for ATP. The CW-type zinc finger occupies 490 to 544 (AMEIPTTIQCDLCLKWRTLPFQLSSVETDYPDTWVCSMNPDPEQDRCEASEQKQK). Zn(2+) contacts are provided by cysteine 499, cysteine 502, cysteine 525, and cysteine 536. The segment at 530 to 791 (DPEQDRCEAS…HPAELRKAQK (262 aa)) is disordered. Basic and acidic residues-rich tracts occupy residues 532 to 543 (EQDRCEASEQKQ) and 550 to 577 (LKKDPKTQEEKQKQLTEKIRQQQEKLEA). Residues 555–583 (KTQEEKQKQLTEKIRQQQEKLEALQKTTP) adopt a coiled-coil conformation. Threonine 582 is modified (phosphothreonine). The residue at position 614 (serine 614) is a Phosphoserine. Residues 629-646 (PSIQTPRPSTQLRKTSVI) are compositionally biased toward polar residues. Residues lysine 650 and lysine 702 each participate in a glycyl lysine isopeptide (Lys-Gly) (interchain with G-Cter in SUMO2) cross-link. Residues 693–702 (PPLSLIPSSK) are compositionally biased toward low complexity. Position 703 is a phosphoserine (serine 703). Residue lysine 714 forms a Glycyl lysine isopeptide (Lys-Gly) (interchain with G-Cter in SUMO2) linkage. Serine 728 carries the phosphoserine modification. The residue at position 731 (threonine 731) is a Phosphothreonine. Serine 737 and serine 741 each carry phosphoserine. Residues 738–775 (LAVSDEEEAEEEAEKRRERCKRGKLAVKEEKKEANELS) adopt a coiled-coil conformation. The segment covering 763-772 (AVKEEKKEAN) has biased composition (basic and acidic residues). Lysine 765 is covalently cross-linked (Glycyl lysine isopeptide (Lys-Gly) (interchain with G-Cter in SUMO2)). Residues serine 775 and serine 777 each carry the phosphoserine modification. A compositionally biased stretch (basic and acidic residues) spans 779 to 791 (GEDHPAELRKAQK). A Glycyl lysine isopeptide (Lys-Gly) (interchain with G-Cter in SUMO2) cross-link involves residue lysine 817. Residue threonine 834 is modified to Phosphothreonine. The segment covering 837–849 (DRWVEKGSEDVRL) has biased composition (basic and acidic residues). Disordered stretches follow at residues 837–874 (DRWVEKGSEDVRLMKPPSPEHQSPDTQQEGGEEEEAMV) and 882–901 (PEPSTSDGLPIEPDTTATSP). Phosphoserine is present on residues serine 854 and serine 859. Positions 856–865 (EHQSPDTQQE) are enriched in polar residues. Lysine 930 is covalently cross-linked (Glycyl lysine isopeptide (Lys-Gly) (interchain with G-Cter in SUMO2)). Residues 966-1011 (RADSRAKASEESLRTSEKKLRETEEKLQKLRTNIVALLQKVQEDID) are a coiled coil.

As to quaternary structure, homodimerizes upon ATP-binding and dissociate upon ATP hydrolysis; homodimerization is required for gene silencing. Binds histone H3 independently of the methylation status at 'Lys-9'. Interacts with HDAC4. Interacts with FAM208A/TASOR and MPHOSPH8; the interactions associate MORC2 with the HUSH complex which recruits MORC2 to heterochromatic loci. Interacts with Morc2b. In terms of processing, phosphorylated by PAK1 at Ser-737 upon DNA damage. Phosphorylation is required for ATPase activity and recruitment to damaged chromatin. In terms of tissue distribution, expressed in the axons and Schwann cells of peripheral nerves. Expressed in testes.

The protein resides in the nucleus. It is found in the cytoplasm. The protein localises to the cytosol. It localises to the chromosome. Its subcellular location is the nucleus matrix. It carries out the reaction ATP + H2O = ADP + phosphate + H(+). With respect to regulation, ATPase activity is dependent of phosphorylation by PAK1 and presence of DNA. Essential for epigenetic silencing by the HUSH complex. Recruited by HUSH to target site in heterochromatin, the ATPase activity and homodimerization are critical for HUSH-mediated silencing. Represses germ cell-related genes and L1 retrotransposons in collaboration with SETDB1 and the HUSH complex, the silencing is dependent of repressive epigenetic modifications, such as H3K9me3 mark. Silencing events often occur within introns of transcriptionally active genes, and lead to the down-regulation of host gene expression. During DNA damage response, regulates chromatin remodeling through ATP hydrolysis. During DNA damage response, may regulate chromatin remodeling through ATP hydrolysis. The sequence is that of ATPase MORC2A from Mus musculus (Mouse).